A 635-amino-acid polypeptide reads, in one-letter code: 3-dehydroshikimate dehydratase (635 aa).

A divalent metal cation contacts are provided by glutamate 134, aspartate 165, glutamine 191, and glutamate 239. 2 consecutive VOC domains span residues 295-414 and 440-590; these read GVEF…LVEQ and RIDH…VYTE. The Mg(2+) site is built by histidine 443, histidine 521, and glutamate 599.

Belongs to the bacterial two-domain DSD family. In terms of assembly, homodimer. Requires Co(2+) as cofactor. Ni(2+) serves as cofactor. It depends on Mg(2+) as a cofactor. Mn(2+) is required as a cofactor.

It catalyses the reaction 3-dehydroshikimate = 3,4-dihydroxybenzoate + H2O. It participates in aromatic compound metabolism; 3,4-dihydroxybenzoate biosynthesis. Functionally, catalyzes the conversion of 3-dehydroshikimate to protocatechuate (3,4-dihydroxybenzoate), a common intermediate of quinate and shikimate degradation pathways. The protein is 3-dehydroshikimate dehydratase of Pseudomonas putida (strain ATCC 47054 / DSM 6125 / CFBP 8728 / NCIMB 11950 / KT2440).